Here is a 238-residue protein sequence, read N- to C-terminus: Glycerol-3-phosphate acyltransferase (238 aa).

6 consecutive transmembrane segments (helical) span residues 5–25, 61–81, 88–108, 125–145, 149–169, and 194–214; these read VIFG…SINF, FLVF…SAIL, FGAV…VFPI, IASL…AMIF, IVSL…IIPW, and AWYL…FTHI.

The protein belongs to the PlsY family. In terms of assembly, probably interacts with PlsX.

Its subcellular location is the cell membrane. The enzyme catalyses an acyl phosphate + sn-glycerol 3-phosphate = a 1-acyl-sn-glycero-3-phosphate + phosphate. It participates in lipid metabolism; phospholipid metabolism. Its function is as follows. Catalyzes the transfer of an acyl group from acyl-phosphate (acyl-PO(4)) to glycerol-3-phosphate (G3P) to form lysophosphatidic acid (LPA). This enzyme utilizes acyl-phosphate as fatty acyl donor, but not acyl-CoA or acyl-ACP. The chain is Glycerol-3-phosphate acyltransferase from Mycoplasma mobile (strain ATCC 43663 / 163K / NCTC 11711) (Mesomycoplasma mobile).